Consider the following 199-residue polypeptide: Fe/S biogenesis protein NfuA (199 aa).

Residues cysteine 151 and cysteine 154 each contribute to the [4Fe-4S] cluster site.

Belongs to the NfuA family. As to quaternary structure, homodimer. Requires [4Fe-4S] cluster as cofactor.

Involved in iron-sulfur cluster biogenesis. Binds a 4Fe-4S cluster, can transfer this cluster to apoproteins, and thereby intervenes in the maturation of Fe/S proteins. Could also act as a scaffold/chaperone for damaged Fe/S proteins. The sequence is that of Fe/S biogenesis protein NfuA from Xylella fastidiosa (strain M12).